A 200-amino-acid chain; its full sequence is NADH-quinone oxidoreductase subunit C (200 aa).

The protein belongs to the complex I 30 kDa subunit family. In terms of assembly, NDH-1 is composed of 14 different subunits. Subunits NuoB, C, D, E, F, and G constitute the peripheral sector of the complex.

It is found in the cell inner membrane. It carries out the reaction a quinone + NADH + 5 H(+)(in) = a quinol + NAD(+) + 4 H(+)(out). NDH-1 shuttles electrons from NADH, via FMN and iron-sulfur (Fe-S) centers, to quinones in the respiratory chain. The immediate electron acceptor for the enzyme in this species is believed to be ubiquinone. Couples the redox reaction to proton translocation (for every two electrons transferred, four hydrogen ions are translocated across the cytoplasmic membrane), and thus conserves the redox energy in a proton gradient. This is NADH-quinone oxidoreductase subunit C from Burkholderia cenocepacia (strain HI2424).